Here is a 229-residue protein sequence, read N- to C-terminus: MATTSTGPLHPYWPRHLRLDHFVPNDLSAWYIVTVLFTVFGALVVTMWLLSSRASVVPLGTWRRLSVCWFAVCAFVHLVIEGWFVLYQKAILGDQAFLSQLWKEYAKGDSRYIIEDNFIICMESITVVLWGPLSLWAVIAFLRQHPSRYVLQFVISLGQIYGDLLYFLTEYRDGFQHGEMGHPIYFWFYFFFMNVLWLVIPGVLFFDSVKQFYGAQNALDTKVMKSKGK.

4 helical membrane passes run 30–50 (WYIVTVLFTVFGALVVTMWLL), 67–87 (VCWFAVCAFVHLVIEGWFVLY), 119–139 (IICMESITVVLWGPLSLWAVI), and 186–206 (FWFYFFFMNVLWLVIPGVLFF). The 144-residue stretch at 62 to 205 (WRRLSVCWFA…LWLVIPGVLF (144 aa)) folds into the EXPERA domain.

The protein belongs to the EBP family. Highly expressed in liver, bowel, adrenal gland, testis, ovary, and uterus and less expressed in brain, cerebellum, skeletal muscle, and heart.

Its subcellular location is the endoplasmic reticulum membrane. The protein resides in the nucleus envelope. The protein localises to the cytoplasmic vesicle. It carries out the reaction lathosterol = 5alpha-cholest-8-en-3beta-ol. The catalysed reaction is zymosterol = 5alpha-cholesta-7,24-dien-3beta-ol. The enzyme catalyses 5,6alpha-epoxy-5alpha-cholestan-3beta-ol + H2O = 5alpha-cholestane-3beta,5,6beta-triol. It catalyses the reaction 5,6beta-epoxy-5beta-cholestan-3beta-ol + H2O = 5alpha-cholestane-3beta,5,6beta-triol. The protein operates within steroid biosynthesis; cholesterol biosynthesis. In terms of biological role, isomerase that catalyzes the conversion of Delta(8)-sterols to their corresponding Delta(7)-isomers. Functionally, component of the microsomal antiestrogen binding site (AEBS), a multiproteic complex at the ER membrane that consists of an association between EBP and 7-dehydrocholesterol reductase/DHCR7. This complex is responsible for cholesterol-5,6-epoxide hydrolase (ChEH) activity, which consists in the hydration of cholesterol-5,6-epoxides (5,6-EC) into cholestane-3beta,5alpha,6beta-triol (CT). The precise role of each component of this complex has not been described yet. This chain is 3-beta-hydroxysteroid-Delta(8),Delta(7)-isomerase (EBP), found in Cavia porcellus (Guinea pig).